A 1048-amino-acid chain; its full sequence is NACHT, LRR and PYD domains-containing protein 8 (1048 aa).

The segment at 1–23 is disordered; that stretch reads MSDVNPPSDTPIPFSSSSTHSSH. Residues 11-23 show a composition bias toward low complexity; that stretch reads PIPFSSSSTHSSH. A Pyrin domain is found at 33 to 131; it reads PGSPCENGVM…NAILPTLEPE (99 aa). One can recognise an NACHT domain in the interval 204–527; it reads KTVAIQGAPG…FYVLCFPQRL (324 aa). Residue 210–217 participates in ATP binding; that stretch reads GAPGIGKT. LRR repeat units follow at residues 815 to 838, 839 to 861, 866 to 890, 923 to 950, and 980 to 1007; these read NGHLKTLILRKNSLENCGAYYLSV, AQLERLSIENCNLTQLTCESLAS, SKMLTHLSLAENALKDEGAKHIWNA, NKTLKSLDLSFNSLKDDGVILLCEALKN, and NQHLRHLDLSKNAIGVYGILTLCEAFSS. Residues 1029–1048 are disordered; sequence PTPHPPDFTGKSDCLSQINP.

Belongs to the NLRP family.

The protein resides in the cytoplasm. Its function is as follows. Involved in inflammation. The sequence is that of NACHT, LRR and PYD domains-containing protein 8 (NLRP8) from Homo sapiens (Human).